Here is a 171-residue protein sequence, read N- to C-terminus: UPF0398 protein M28_Spy1394 (171 aa).

The protein belongs to the UPF0398 family.

The protein is UPF0398 protein M28_Spy1394 of Streptococcus pyogenes serotype M28 (strain MGAS6180).